A 451-amino-acid chain; its full sequence is Phosphoglucosamine mutase (451 aa).

Residue S103 is the Phosphoserine intermediate of the active site. Residues S103, D243, D245, and D247 each contribute to the Mg(2+) site. S103 carries the phosphoserine modification.

This sequence belongs to the phosphohexose mutase family. Mg(2+) is required as a cofactor. Activated by phosphorylation.

The enzyme catalyses alpha-D-glucosamine 1-phosphate = D-glucosamine 6-phosphate. Catalyzes the conversion of glucosamine-6-phosphate to glucosamine-1-phosphate. This chain is Phosphoglucosamine mutase, found in Limosilactobacillus reuteri subsp. reuteri (strain JCM 1112) (Lactobacillus reuteri).